The following is a 189-amino-acid chain: Glycerol-3-phosphate acyltransferase (189 aa).

A run of 4 helical transmembrane segments spans residues 1–21 (MFWLLALLAYLLGSLSFAIVL), 77–97 (LQEQAWVGVCAVLGHLFPVYF), 111–131 (MLMGLYFPAALLAIAAWLLTF), and 151–171 (LLAWREPAALLPISVLTVMIV).

Belongs to the PlsY family. As to quaternary structure, probably interacts with PlsX.

It is found in the cell inner membrane. It catalyses the reaction an acyl phosphate + sn-glycerol 3-phosphate = a 1-acyl-sn-glycero-3-phosphate + phosphate. It functions in the pathway lipid metabolism; phospholipid metabolism. Functionally, catalyzes the transfer of an acyl group from acyl-phosphate (acyl-PO(4)) to glycerol-3-phosphate (G3P) to form lysophosphatidic acid (LPA). This enzyme utilizes acyl-phosphate as fatty acyl donor, but not acyl-CoA or acyl-ACP. This Pseudomonas putida (strain W619) protein is Glycerol-3-phosphate acyltransferase.